A 118-amino-acid polypeptide reads, in one-letter code: Large ribosomal subunit protein bL20 (118 aa).

It belongs to the bacterial ribosomal protein bL20 family.

Binds directly to 23S ribosomal RNA and is necessary for the in vitro assembly process of the 50S ribosomal subunit. It is not involved in the protein synthesizing functions of that subunit. The chain is Large ribosomal subunit protein bL20 from Stutzerimonas stutzeri (strain A1501) (Pseudomonas stutzeri).